The sequence spans 477 residues: Spliceosome-associated protein CWC27 homolog (477 aa).

Residues 11-166 (SNGKVLLKTT…NPHKIKCTEV (156 aa)) enclose the PPIase cyclophilin-type domain. 2 disordered regions span residues 203–355 (LLSF…AENT) and 401–477 (TQAI…KERR). Over residues 208–218 (EEAEEDEEEVN) the composition is skewed to acidic residues. Composition is skewed to basic and acidic residues over residues 230-240 (SSHDLLKDDPR) and 247-258 (VEREKDSQSADS). The segment covering 259 to 279 (DKDEDEMSDDDDEEEDDEMDS) has biased composition (acidic residues). Basic and acidic residues-rich tracts occupy residues 280–299 (DEKHQMKDRISNKLRKDPSK), 311–353 (EERK…KEAE), and 430–442 (QFEEKSGKVKDAN). Positions 308–381 (DEAEERKSSR…EEVRKKNTNK (74 aa)) form a coiled coil.

The protein belongs to the cyclophilin-type PPIase family. Part of the activated spliceosome B/catalytic step 1 spliceosome, one of the forms of the spliceosome which has a well-formed active site but still cannot catalyze the branching reaction and is composed at least of 52 proteins, the U2, U5 and U6 snRNAs and the pre-mRNA. Recruited during early steps of activated spliceosome B maturation, it is probably one of the first proteins released from this complex as he matures to the spliceosome C complex. Component of the minor spliceosome, which splices U12-type introns.

The protein localises to the nucleus. In terms of biological role, as part of the spliceosome, plays a role in pre-mRNA splicing. Probable inactive PPIase with no peptidyl-prolyl cis-trans isomerase activity. This chain is Spliceosome-associated protein CWC27 homolog (cwc27), found in Xenopus laevis (African clawed frog).